Reading from the N-terminus, the 151-residue chain is Deoxyuridine 5'-triphosphate nucleotidohydrolase (151 aa).

Substrate is bound by residues 70-72 (RSG), asparagine 83, 87-89 (LID), and methionine 97.

The protein belongs to the dUTPase family. Requires Mg(2+) as cofactor.

It carries out the reaction dUTP + H2O = dUMP + diphosphate + H(+). It participates in pyrimidine metabolism; dUMP biosynthesis; dUMP from dCTP (dUTP route): step 2/2. This enzyme is involved in nucleotide metabolism: it produces dUMP, the immediate precursor of thymidine nucleotides and it decreases the intracellular concentration of dUTP so that uracil cannot be incorporated into DNA. This chain is Deoxyuridine 5'-triphosphate nucleotidohydrolase, found in Yersinia pseudotuberculosis serotype O:1b (strain IP 31758).